We begin with the raw amino-acid sequence, 347 residues long: O-methyltransferase aunE (347 aa).

Tryptophan 166 lines the S-adenosyl-L-methionine pocket. Catalysis depends on histidine 265, which acts as the Proton acceptor.

This sequence belongs to the class I-like SAM-binding methyltransferase superfamily. Cation-independent O-methyltransferase family.

The protein operates within secondary metabolite biosynthesis. In terms of biological role, O-methyltransferase; part of the gene cluster that mediates the biosynthesis of aurasperone B, a dimeric gamma-naphthopyrone. The first step in the biosynthesis of aurasperone B is the production of gamma-naphthopyrone precursor YWA1 by the non-reducing polyketide synthase albA, via condensation of one acetyl-CoA starter unit with 6 malonyl-CoA units. YWA1 is then methylated by aunE at position C-6 to yield foncesin which is further methylated at position C-8 by aunD to produce fonsecin B. A key enzyme in the biosynthetic pathway is the cytochrome P450 monooxygenase aunB which catalyzes the oxidative dimerization of fonsecin B to aurasperone B. AunB also catalyzes the oxidative dimerization of rubrofusarin B into aurasperone A. This chain is O-methyltransferase aunE, found in Aspergillus niger (strain ATCC 1015 / CBS 113.46 / FGSC A1144 / LSHB Ac4 / NCTC 3858a / NRRL 328 / USDA 3528.7).